Here is a 362-residue protein sequence, read N- to C-terminus: 3-dehydroquinate synthase (362 aa).

Residues 70-75, 104-108, 128-129, lysine 141, and lysine 150 each bind NAD(+); these read DGEKYK, GVIGD, and TT. The Zn(2+) site is built by glutamate 183, histidine 246, and histidine 263.

It belongs to the sugar phosphate cyclases superfamily. Dehydroquinate synthase family. It depends on Co(2+) as a cofactor. The cofactor is Zn(2+). NAD(+) serves as cofactor.

It localises to the cytoplasm. It catalyses the reaction 7-phospho-2-dehydro-3-deoxy-D-arabino-heptonate = 3-dehydroquinate + phosphate. It functions in the pathway metabolic intermediate biosynthesis; chorismate biosynthesis; chorismate from D-erythrose 4-phosphate and phosphoenolpyruvate: step 2/7. Its function is as follows. Catalyzes the conversion of 3-deoxy-D-arabino-heptulosonate 7-phosphate (DAHP) to dehydroquinate (DHQ). This is 3-dehydroquinate synthase from Acinetobacter baylyi (strain ATCC 33305 / BD413 / ADP1).